The following is a 212-amino-acid chain: uncharacterized protein (212 aa).

Residues G53, E74, and D97 each contribute to the S-adenosyl-L-methionine site.

Belongs to the methyltransferase superfamily. YrrT family.

In terms of biological role, could be a S-adenosyl-L-methionine-dependent methyltransferase. This is an uncharacterized protein from Bacillus cereus (strain ATCC 14579 / DSM 31 / CCUG 7414 / JCM 2152 / NBRC 15305 / NCIMB 9373 / NCTC 2599 / NRRL B-3711).